A 620-amino-acid polypeptide reads, in one-letter code: Extensin (620 aa).

An N-terminal signal peptide occupies residues 1 to 20 (MKLSTLFALVLLLQSTAILS). A compositionally biased stretch (pro residues) spans 34–45 (LPPPVTSQPPPS). Residues 34–620 (LPPPVTSQPP…PPYGLLLSTP (587 aa)) are disordered. The H-A-P-P repeat unit spans residues 70–73 (HAPP). A compositionally biased stretch (pro residues) spans 106–129 (NPPPSPVISPSHPPPSYGAPPPSH). Residues 145–163 (SHGHAPPSGGHTPPRGQHP) show a composition bias toward low complexity. An H-A-P-P repeat occupies 148 to 151 (HAPP). Residues 164-177 (PSHRRPSPPSRHGH) are compositionally biased toward basic residues. Over residues 178–219 (PPPPTYAQPPPTPIYSPSPQVQPPPTYSPPPPTHVQPTPSPP) the composition is skewed to pro residues. A contains the Ser-Pro(4) repeats region spans residues 205–620 (SPPPPTHVQP…PPYGLLLSTP (416 aa)). A run of 2 repeats spans residues 229 to 235 (THRHAPP) and 236 to 242 (THRHAPP). Residues 229-241 (THRHAPPTHRHAP) show a composition bias toward basic residues. The 2 X 7 AA tandem repeats of T-H-R-H-A-P-P stretch occupies residues 229–242 (THRHAPPTHRHAPP). 2 stretches are compositionally biased toward pro residues: residues 251–552 (HLPP…PPHW) and 562–613 (GQPP…PPPY). The tract at residues 499–600 (PPTFSPPPPR…PTPTYGQPPS (102 aa)) is 3 X approximate tandem repeats.

Hydroxylated on proline residues in the S-P-P-P-P repeat. In terms of processing, O-glycosylated on hydroxyprolines. In terms of tissue distribution, expressed in the tip of the emerging lateral roots.

Its subcellular location is the secreted. The protein localises to the primary cell wall. Its function is as follows. Has a specialized structural function, possibly in the mechanical penetration of the cortex and epidermis of the main root. This chain is Extensin (HRGPNT3), found in Nicotiana tabacum (Common tobacco).